The chain runs to 295 residues: Ethanolamine ammonia-lyase small subunit (295 aa).

Adenosylcob(III)alamin is bound by residues Val207, Glu228, and Cys258.

This sequence belongs to the EutC family. In terms of assembly, the basic unit is a heterodimer which dimerizes to form tetramers. The heterotetramers trimerize; 6 large subunits form a core ring with 6 small subunits projecting outwards. Adenosylcob(III)alamin is required as a cofactor.

It localises to the bacterial microcompartment. The catalysed reaction is ethanolamine = acetaldehyde + NH4(+). Its pathway is amine and polyamine degradation; ethanolamine degradation. Functionally, catalyzes the deamination of various vicinal amino-alcohols to oxo compounds. Allows this organism to utilize ethanolamine as the sole source of nitrogen and carbon in the presence of external vitamin B12. The protein is Ethanolamine ammonia-lyase small subunit of Escherichia fergusonii (strain ATCC 35469 / DSM 13698 / CCUG 18766 / IAM 14443 / JCM 21226 / LMG 7866 / NBRC 102419 / NCTC 12128 / CDC 0568-73).